Reading from the N-terminus, the 80-residue chain is MAVKLRLQRFGNHKRPFYRIVAADAKAPRDGKFLEIVGTYEPIKGAVAVDSEKVQAWMNNGAQPTDTVKSLFKKFNVLNK.

The protein belongs to the bacterial ribosomal protein bS16 family.

The polypeptide is Small ribosomal subunit protein bS16 (Acholeplasma laidlawii (strain PG-8A)).